Consider the following 509-residue polypeptide: UDP-N-acetylmuramoyl-L-alanyl-D-glutamate--2,6-diaminopimelate ligase (509 aa).

Ser32 is a binding site for UDP-N-acetyl-alpha-D-muramoyl-L-alanyl-D-glutamate. Gly117–Thr123 provides a ligand contact to ATP. UDP-N-acetyl-alpha-D-muramoyl-L-alanyl-D-glutamate contacts are provided by residues Thr159–Thr160, Ser186, Gln192, and Arg194. Lys226 is subject to N6-carboxylysine. Residues Arg401, Asp425–Arg428, Gly476, and Glu480 each bind meso-2,6-diaminopimelate. The Meso-diaminopimelate recognition motif signature appears at Asp425–Arg428.

It belongs to the MurCDEF family. MurE subfamily. The cofactor is Mg(2+). In terms of processing, carboxylation is probably crucial for Mg(2+) binding and, consequently, for the gamma-phosphate positioning of ATP.

It is found in the cytoplasm. The enzyme catalyses UDP-N-acetyl-alpha-D-muramoyl-L-alanyl-D-glutamate + meso-2,6-diaminopimelate + ATP = UDP-N-acetyl-alpha-D-muramoyl-L-alanyl-gamma-D-glutamyl-meso-2,6-diaminopimelate + ADP + phosphate + H(+). Its pathway is cell wall biogenesis; peptidoglycan biosynthesis. Functionally, catalyzes the addition of meso-diaminopimelic acid to the nucleotide precursor UDP-N-acetylmuramoyl-L-alanyl-D-glutamate (UMAG) in the biosynthesis of bacterial cell-wall peptidoglycan. The sequence is that of UDP-N-acetylmuramoyl-L-alanyl-D-glutamate--2,6-diaminopimelate ligase from Prochlorococcus marinus (strain NATL2A).